The chain runs to 229 residues: LexA repressor (229 aa).

Residues 26-46 (FDEMKEALDLASKSGIHRLIT) constitute a DNA-binding region (H-T-H motif). Active-site for autocatalytic cleavage activity residues include Ser149 and Lys187.

This sequence belongs to the peptidase S24 family. In terms of assembly, homodimer.

The enzyme catalyses Hydrolysis of Ala-|-Gly bond in repressor LexA.. In terms of biological role, represses a number of genes involved in the response to DNA damage (SOS response), including recA and lexA. In the presence of single-stranded DNA, RecA interacts with LexA causing an autocatalytic cleavage which disrupts the DNA-binding part of LexA, leading to derepression of the SOS regulon and eventually DNA repair. In Phenylobacterium zucineum (strain HLK1), this protein is LexA repressor.